A 484-amino-acid chain; its full sequence is tRNA sulfurtransferase (484 aa).

The region spanning 63–167 (REMIERLCCT…DQRLFVVHRQ (105 aa)) is the THUMP domain. ATP is bound by residues 185 to 186 (LM), Lys-267, Gly-289, and Gln-298. An intrachain disulfide couples Cys-346 to Cys-457. The 79-residue stretch at 405-483 (ALAGQIVLDI…GHANVRVYRP (79 aa)) folds into the Rhodanese domain. Cys-457 functions as the Cysteine persulfide intermediate in the catalytic mechanism.

Belongs to the ThiI family.

The protein resides in the cytoplasm. The enzyme catalyses [ThiI sulfur-carrier protein]-S-sulfanyl-L-cysteine + a uridine in tRNA + 2 reduced [2Fe-2S]-[ferredoxin] + ATP + H(+) = [ThiI sulfur-carrier protein]-L-cysteine + a 4-thiouridine in tRNA + 2 oxidized [2Fe-2S]-[ferredoxin] + AMP + diphosphate. It carries out the reaction [ThiS sulfur-carrier protein]-C-terminal Gly-Gly-AMP + S-sulfanyl-L-cysteinyl-[cysteine desulfurase] + AH2 = [ThiS sulfur-carrier protein]-C-terminal-Gly-aminoethanethioate + L-cysteinyl-[cysteine desulfurase] + A + AMP + 2 H(+). The protein operates within cofactor biosynthesis; thiamine diphosphate biosynthesis. In terms of biological role, catalyzes the ATP-dependent transfer of a sulfur to tRNA to produce 4-thiouridine in position 8 of tRNAs, which functions as a near-UV photosensor. Also catalyzes the transfer of sulfur to the sulfur carrier protein ThiS, forming ThiS-thiocarboxylate. This is a step in the synthesis of thiazole, in the thiamine biosynthesis pathway. The sulfur is donated as persulfide by IscS. The chain is tRNA sulfurtransferase from Azotobacter vinelandii (strain DJ / ATCC BAA-1303).